The following is a 226-amino-acid chain: Lipoprotein signal peptidase (226 aa).

A run of 3 helical transmembrane segments spans residues 12–32, 69–89, and 103–123; these read KVVA…KIWV, FLSL…AKLV, and SLII…GVIF. Residues Asp150 and Asp184 contribute to the active site. The chain crosses the membrane as a helical span at residues 173-193; that stretch reads FVFFHPVFNFADSCISIGLIL.

The protein belongs to the peptidase A8 family.

It is found in the cell inner membrane. It catalyses the reaction Release of signal peptides from bacterial membrane prolipoproteins. Hydrolyzes -Xaa-Yaa-Zaa-|-(S,diacylglyceryl)Cys-, in which Xaa is hydrophobic (preferably Leu), and Yaa (Ala or Ser) and Zaa (Gly or Ala) have small, neutral side chains.. It participates in protein modification; lipoprotein biosynthesis (signal peptide cleavage). This protein specifically catalyzes the removal of signal peptides from prolipoproteins. The sequence is that of Lipoprotein signal peptidase from Porphyromonas gingivalis (strain ATCC 33277 / DSM 20709 / CIP 103683 / JCM 12257 / NCTC 11834 / 2561).